Consider the following 458-residue polypeptide: Adenylosuccinate synthetase (458 aa).

GTP contacts are provided by residues 17–23 (GDEGKGK) and 45–47 (GHT). The active-site Proton acceptor is Asp-18. Mg(2+) is bound by residues Asp-18 and Gly-45. Residues 18–21 (DEGK), 43–46 (NAGH), Thr-137, Arg-151, Gln-247, Thr-262, and Arg-330 each bind IMP. His-46 acts as the Proton donor in catalysis. 326–332 (VTTGRSR) is a substrate binding site. Residues Arg-332, 358-360 (KLD), and 440-442 (STS) each bind GTP.

This sequence belongs to the adenylosuccinate synthetase family. As to quaternary structure, homodimer. The cofactor is Mg(2+).

The protein localises to the cytoplasm. The catalysed reaction is IMP + L-aspartate + GTP = N(6)-(1,2-dicarboxyethyl)-AMP + GDP + phosphate + 2 H(+). The protein operates within purine metabolism; AMP biosynthesis via de novo pathway; AMP from IMP: step 1/2. In terms of biological role, plays an important role in the de novo pathway of purine nucleotide biosynthesis. Catalyzes the first committed step in the biosynthesis of AMP from IMP. The polypeptide is Adenylosuccinate synthetase (Acidovorax sp. (strain JS42)).